We begin with the raw amino-acid sequence, 582 residues long: MTQQQRGVVQSIAGPAVIASGMYGAKMYDIVRVGKERLVGEIIRLEGNTAFVQVYEDTSGLTVGEPVETTGLPLSVELGPGMLNGIYDGIQRPLDKIREASGDFIARGIEVSSLDRTKKWAFTPTVQAGDTVGGSSILGTVPEFSFTHKILTPPDKGGRLTWVAPAGEYTIDDTIATLEDGTNLRLAHYWPVRAPRPVAQKLDPSQPFLTGMRILDVLFPLVMGGTAAIPGPFGSGKTVTQQSVAKYGNADIVVYVGCGERGNEMTDVLVEFPELEDPKTGGPLMHRTILIANTSNMPVAAREASVYTGITLAEYFRDQGYSVSLMADSTSRWAEALREISSRLEEMPAEEGYPPYLGAKLAAFYERAGAVKTLAGEDGAVSVIGAVSPAGGDMSEPVTQATLRITGAFWRLDAGLARRRHFPAINWNGSYSLFTPILDSWYRENVGRDFPELRQRISNLLQQEASLQEVVQLVGPDALQDQERLVIETGRMLRQDFLQQNGFDPVDASASMPKNYGLMKMMLKFYDEAEAALRNGVGIDEIIQNPVIEKLSRARYVPEADFMAYAESVMDELDTTFKGVKA.

Position 231–238 (231–238 (GPFGSGKT)) interacts with ATP.

It belongs to the ATPase alpha/beta chains family.

It catalyses the reaction ATP + H2O + 4 H(+)(in) = ADP + phosphate + 5 H(+)(out). Its function is as follows. Produces ATP from ADP in the presence of a proton gradient across the membrane. The V-type alpha chain is a catalytic subunit. The polypeptide is V-type ATP synthase alpha chain (Deinococcus geothermalis (strain DSM 11300 / CIP 105573 / AG-3a)).